The primary structure comprises 113 residues: MKKLKSFGGKNLSGKSMNQLQKLQEEMQKKLQEVEEGFSNVEVEVSVGGGAIKILATADRKVKDIEIDEDLLSDGETLKDLLTAGINELMEKIEKIREEEMAKVTQNLLPFGF.

Belongs to the YbaB/EbfC family. In terms of assembly, homodimer.

The protein resides in the cytoplasm. It localises to the nucleoid. Binds to DNA and alters its conformation. May be involved in regulation of gene expression, nucleoid organization and DNA protection. This chain is Nucleoid-associated protein THA_1374, found in Thermosipho africanus (strain TCF52B).